The sequence spans 370 residues: Probable aspartic-type endopeptidase ARB_04018 (370 aa).

A signal peptide spans 1 to 21 (MWHSPFSTAFTLFLGFFTLTL). N-linked (GlcNAc...) asparagine glycosylation is found at asparagine 80 and asparagine 102. One can recognise a Peptidase A1 domain in the interval 94 to 367 (FVNEITIGND…DHDGPKMGFA (274 aa)). Residue aspartate 110 is part of the active site. N-linked (GlcNAc...) asparagine glycosylation occurs at asparagine 251. Aspartate 261 is an active-site residue. N-linked (GlcNAc...) asparagine glycosylation occurs at asparagine 298.

This sequence belongs to the peptidase A1 family.

It is found in the secreted. Probable aspartic-type endopeptidase which contributes to virulence. The sequence is that of Probable aspartic-type endopeptidase ARB_04018 from Arthroderma benhamiae (strain ATCC MYA-4681 / CBS 112371) (Trichophyton mentagrophytes).